The primary structure comprises 321 residues: Nucleus-vacuole junction protein 1 (321 aa).

The N-terminal stretch at 1–22 is a signal peptide; that stretch reads MTRPPLVRGIFSLGLSVAVLKG. Residues 73 to 125 are TSC13-binding; it reads ELSWRKVFNFISRQSSELDARIYVLILLLSFLLPIAWTVLDGDRETTLEDKDN. A helical membrane pass occupies residues 94 to 114; sequence IYVLILLLSFLLPIAWTVLDG. The tract at residues 139–195 is OSH1-binding; the sequence is KHYNDGERAVLQFGKNRSEPIILSYKDMNVLEGEHEFTSKEEHSNSHLTSKSENALS. Ser156 carries the phosphoserine modification. Over residues 174–183 the composition is skewed to basic and acidic residues; it reads EFTSKEEHSN. The disordered stretch occupies residues 174 to 194; that stretch reads EFTSKEEHSNSHLTSKSENAL. A compositionally biased stretch (polar residues) spans 184–194; that stretch reads SHLTSKSENAL. Ser199 bears the Phosphoserine mark. Residues 210–275 form a disordered region; the sequence is QLEEDKNEPN…SLKSSTSFPI (66 aa). The VAC8-binding stretch occupies residues 233-321; it reads DCSSSSEVES…EQAYSQPFRY (89 aa). Residues 242 to 262 show a composition bias toward basic and acidic residues; that stretch reads SQSKCRKESTAEPDSLSRDTR. A compositionally biased stretch (low complexity) spans 263–272; the sequence is TTSSLKSSTS. A phosphoserine mark is found at Ser285 and Ser298. A disordered region spans residues 299–321; that stretch reads PTKSSNLDAQVNTEQAYSQPFRY.

Interacts with OSH1, TSC13 and VAC8.

The protein localises to the nucleus outer membrane. In terms of biological role, involved in the formation of nucleus-vacuole (NV) junctions during piecemeal microautophagy of the nucleus (PMN). NV junctions are interorganelle interfaces mediated by NVJ1 in the nuclear envelope and VAC8 on the vacuole membrane. Together, NVJ1 and VAC8 form Velcro-like patches through which teardrop-like portions of the nucleus are pinched off into the vacuolar lumen and degraded by the PMN process. Also acts as an outer-nuclear membrane receptor for OSH1 and TSC13. This chain is Nucleus-vacuole junction protein 1 (NVJ1), found in Saccharomyces cerevisiae (strain YJM789) (Baker's yeast).